A 190-amino-acid chain; its full sequence is uncharacterized protein (190 aa).

The protein to E.coli YdjR.

This is an uncharacterized protein from Pseudomonas putida (Arthrobacter siderocapsulatus).